We begin with the raw amino-acid sequence, 273 residues long: Citrate lyase subunit beta-like protein (273 aa).

Residues Arg64 and Glu112 each coordinate substrate. 2 residues coordinate Mg(2+): Glu112 and Asp138.

Belongs to the HpcH/HpaI aldolase family. Citrate lyase beta subunit-like subfamily. Homotrimer. The cofactor is Mg(2+).

Its function is as follows. May play a role in fatty acid biosynthesis. The sequence is that of Citrate lyase subunit beta-like protein (citE) from Mycobacterium tuberculosis (strain CDC 1551 / Oshkosh).